The chain runs to 435 residues: Phospholipase A1 EG1, chloroplastic/mitochondrial (435 aa).

The N-terminal 31 residues, methionine 1–glycine 31, are a transit peptide targeting the chloroplast and mitochondrion. The GXSXG motif lies at glycine 264–glycine 268. Serine 266 serves as the catalytic Acyl-ester intermediate. Residues aspartate 324 and histidine 371 each act as charge relay system in the active site.

It belongs to the AB hydrolase superfamily. Lipase family.

It is found in the mitochondrion. It localises to the plastid. The protein localises to the chloroplast. The catalysed reaction is a 1,2-diacyl-sn-glycero-3-phosphocholine + H2O = a 2-acyl-sn-glycero-3-phosphocholine + a fatty acid + H(+). Its function is as follows. Phospholipase that releases free fatty acids from phospholipids. Catalyzes the initial step of jasmonate (JA) biosynthesis. Required for the biosynthesis of endogenous JA in seedling, inflorescence and spikelets. Not essential for JA biosynthesis after wounding. Mediates spikelet development and specification of empty-glume identity. Functions in a high temperature-dependent manner to maintain floral developmental robustness under heat stress conditions. Functions by safeguarding the expression of several floral identity genes, such as MADS1, MADS6 and G1. The protein is Phospholipase A1 EG1, chloroplastic/mitochondrial of Oryza sativa subsp. indica (Rice).